Reading from the N-terminus, the 287-residue chain is MTDSTLYLIKAFFLGIIEGLTEFIPVSSTGHLILIGDWINFTSSSGKVFEVVIQFGSILAVMWIFRARLWQLIRGTLTGVPAETAFTRNLLLAFLPAAVVGAIFIKTIKQVFYHPGVVAVTLVLGGLIMLWVERKTHHTPGDAPGAADDTASDERASAHTLEQISWKQALGVGVAQCLAMVPGTSRSGATIIGGMIAGIQRKTATEFSFFLAMPTMLGAATYDLYRNIDLLSQHDLSAIAVGFAAAFISALVVVRAVLRFVANHTYRGFAWYRIALGIVVAAWLMTK.

Helical transmembrane passes span 6–26, 45–65, 85–105, 111–131, 204–224, 238–258, and 265–285; these read LYLIKAFFLGIIEGLTEFIPV, SGKVFEVVIQFGSILAVMWIF, AFTRNLLLAFLPAAVVGAIFI, VFYHPGVVAVTLVLGGLIMLW, ATEFSFFLAMPTMLGAATYDL, AIAVGFAAAFISALVVVRAVL, and TYRGFAWYRIALGIVVAAWLM.

The protein belongs to the UppP family.

It localises to the cell inner membrane. The enzyme catalyses di-trans,octa-cis-undecaprenyl diphosphate + H2O = di-trans,octa-cis-undecaprenyl phosphate + phosphate + H(+). In terms of biological role, catalyzes the dephosphorylation of undecaprenyl diphosphate (UPP). Confers resistance to bacitracin. In Bordetella petrii (strain ATCC BAA-461 / DSM 12804 / CCUG 43448), this protein is Undecaprenyl-diphosphatase.